The following is a 447-amino-acid chain: Thiol-specific monooxygenase (447 aa).

FAD contacts are provided by residues 13–17 (GAGPS), E38, 46–47 (VW), 91–92 (NT), and 137–138 (DV). 90-91 (TN) serves as a coordination point for NADP(+). Residue 223-226 (SAND) coordinates NADP(+).

This sequence belongs to the FMO family. Monomer. Requires FAD as cofactor.

In terms of biological role, flavin-dependent oxidation of thiol-containing compounds. Probably required for the correct folding of disulfide-bonded proteins. This is Thiol-specific monooxygenase (fmo1) from Schizosaccharomyces pombe (strain 972 / ATCC 24843) (Fission yeast).